Reading from the N-terminus, the 1146-residue chain is Large proline-rich protein BAG6 (1146 aa).

M1 carries the post-translational modification N-acetylmethionine. The Ubiquitin-like domain maps to 17–92; the sequence is LEVLVKTLDS…HLVERAPPQT (76 aa). 5 disordered regions span residues 87-128, 186-268, 381-436, 457-525, and 555-618; these read RAPP…HDRN, RGGT…HPSP, TMTG…TSHP, QDSG…QGAG, and PGMA…SAAD. The residue at position 96 (S96) is a Phosphoserine. Low complexity predominate over residues 96-108; that stretch reads SGASSGTGSASAT. Over residues 109–122 the composition is skewed to gly residues; that stretch reads HGGGPLPGTRGPGA. T117 is modified (phosphothreonine). Positions 208 to 217 are enriched in polar residues; sequence VALNSQTSEP. Tandem repeats lie at residues 236–265 and 410–438. The tract at residues 236 to 650 is 4 X 29 AA approximate repeats; sequence RPPTQTPELP…LASPTITVAV (415 aa). Positions 239–257 are enriched in pro residues; the sequence is TQTPELPPSGPAPAGPAPA. The segment covering 394 to 413 has biased composition (low complexity); sequence GAEAASPGSGQASSLPPSSA. 2 stretches are compositionally biased toward pro residues: residues 422–433 and 502–515; these read APPPGPAPPPAT and PTPPQARPSHPGGP. Composition is skewed to low complexity over residues 555 to 573 and 583 to 601; these read PGMAPASASAPATAQAQAP and PATASASAGTTNTATTAGP. 2 repeat units span residues 589 to 616 and 622 to 650. Residues 603-614 are compositionally biased toward pro residues; the sequence is PGGPAQPPPPQP. Disordered regions lie at residues 666–711 and 961–1146; these read ASQA…ESLP and PQAL…ADDP. The span at 670–694 shows a compositional bias: pro residues; that stretch reads APPPPPPPPPPPPAPEQQTTPPPGS. Residues 977 to 986 show a composition bias toward basic and acidic residues; it reads TSPEPQREDA. Phosphoserine is present on residues S978 and S987. The segment covering 1021 to 1034 has biased composition (low complexity); the sequence is AEPWAAAVPPEWVP. The tract at residues 1024-1054 is required for interaction with GET4; sequence WAAAVPPEWVPIIQQDIQSQRKVKPQPPLSD. A Nuclear localization site motif is present at residues 1026 to 1068; it reads AAVPPEWVPIIQQDIQSQRKVKPQPPLSDAYLSGMPAKRRKTM. The interval 1036 to 1146 is sufficient for the delivery of client proteins to the endoplasmic reticulum; the sequence is IQQDIQSQRK…NAHRAFADDP (111 aa). T1067 is modified (phosphothreonine). Residues 1072–1129 form a BAG-similar domain, required and sufficient for interaction with UBL4A region; sequence GPQLLLSEAVSRAAKAAGARPLTSPESLSRDLEAPEVQESYRQQLRSDIQKRLQEDPN. Low complexity predominate over residues 1080 to 1090; sequence AVSRAAKAAGA. Phosphoserine is present on residues S1095 and S1131.

Component of the BAG6/BAT3 complex, also named BAT3 complex, at least composed of BAG6, UBL4A and GET4/TRC35. Interacts with GET4; the interaction is direct and localizes BAG6 in the cytosol. Interacts with UBL4A; the interaction is direct and required for UBL4A protein stability. Interacts with AIFM1. Interacts with HSPA2. Interacts with CTCFL. Interacts with p300/EP300. Interacts (via ubiquitin-like domain) with RNF126; required for BAG6-dependent ubiquitination of proteins mislocalized to the cytosol. Interacts (via ubiquitin-like domain) with SGTA; SGTA competes with RNF126 by binding the same region of BAG6, thereby promoting deubiquitination of BAG6-target proteins and rescuing them from degradation. Interacts with ricin A chain. Interacts with VCP and AMFR; both form the VCP/p97-AMFR/gp78 complex. Interacts with SYVN1. Interacts with USP13; the interaction is direct and may mediate UBL4A deubiquitination. Interacts with ZFAND2B. Interacts with KPNA2. Interacts with UBQLN4. Ricin can induce a cleavage by the caspase CASP3. The released C-terminal peptide induces apoptosis.

It is found in the cytoplasm. It localises to the cytosol. The protein localises to the nucleus. Its subcellular location is the secreted. The protein resides in the extracellular exosome. ATP-independent molecular chaperone preventing the aggregation of misfolded and hydrophobic patches-containing proteins. Functions as part of a cytosolic protein quality control complex, the BAG6/BAT3 complex, which maintains these client proteins in a soluble state and participates in their proper delivery to the endoplasmic reticulum or alternatively can promote their sorting to the proteasome where they undergo degradation. The BAG6/BAT3 complex is involved in the post-translational delivery of tail-anchored/type II transmembrane proteins to the endoplasmic reticulum membrane. Recruited to ribosomes, it interacts with the transmembrane region of newly synthesized tail-anchored proteins and together with SGTA and ASNA1 mediates their delivery to the endoplasmic reticulum. Client proteins that cannot be properly delivered to the endoplasmic reticulum are ubiquitinated by RNF126, an E3 ubiquitin-protein ligase associated with BAG6 and are sorted to the proteasome. SGTA which prevents the recruitment of RNF126 to BAG6 may negatively regulate the ubiquitination and the proteasomal degradation of client proteins. Similarly, the BAG6/BAT3 complex also functions as a sorting platform for proteins of the secretory pathway that are mislocalized to the cytosol either delivering them to the proteasome for degradation or to the endoplasmic reticulum. The BAG6/BAT3 complex also plays a role in the endoplasmic reticulum-associated degradation (ERAD), a quality control mechanism that eliminates unwanted proteins of the endoplasmic reticulum through their retrotranslocation to the cytosol and their targeting to the proteasome. It maintains these retrotranslocated proteins in an unfolded yet soluble state condition in the cytosol to ensure their proper delivery to the proteasome. BAG6 is also required for selective ubiquitin-mediated degradation of defective nascent chain polypeptides by the proteasome. In this context, it may participate in the production of antigenic peptides and play a role in antigen presentation in immune response. BAG6 is also involved in endoplasmic reticulum stress-induced pre-emptive quality control, a mechanism that selectively attenuates the translocation of newly synthesized proteins into the endoplasmic reticulum and reroutes them to the cytosol for proteasomal degradation. BAG6 may ensure the proper degradation of these proteins and thereby protects the endoplasmic reticulum from protein overload upon stress. By inhibiting the polyubiquitination and subsequent proteasomal degradation of HSPA2 it may also play a role in the assembly of the synaptonemal complex during spermatogenesis. Also positively regulates apoptosis by interacting with and stabilizing the proapoptotic factor AIFM1. By controlling the steady-state expression of the IGF1R receptor, indirectly regulates the insulin-like growth factor receptor signaling pathway. Functionally, involved in DNA damage-induced apoptosis: following DNA damage, accumulates in the nucleus and forms a complex with p300/EP300, enhancing p300/EP300-mediated p53/TP53 acetylation leading to increase p53/TP53 transcriptional activity. When nuclear, may also act as a component of some chromatin regulator complex that regulates histone 3 'Lys-4' dimethylation (H3K4me2). In terms of biological role, released extracellularly via exosomes, it is a ligand of the natural killer/NK cells receptor NCR3 and stimulates NK cells cytotoxicity. It may thereby trigger NK cells cytotoxicity against neighboring tumor cells and immature myeloid dendritic cells (DC). Its function is as follows. May mediate ricin-induced apoptosis. The sequence is that of Large proline-rich protein BAG6 from Rattus norvegicus (Rat).